The chain runs to 501 residues: DEAD-box ATP-dependent RNA helicase 20 (501 aa).

Basic and acidic residues-rich tracts occupy residues 1-20 and 38-53; these read MSRY…RRSD and SKKD…KLDL. Residues 1-53 form a disordered region; that stretch reads MSRYDSRTGDSTSYRDRRSDSGFGGTSSYGSSGSHTSSKKDNDGNESPRKLDL. The Q motif motif lies at 99–127; that stretch reads KSFRDVGFPDYVLEEVKKAGFTEPTPIQS. One can recognise a Helicase ATP-binding domain in the interval 130–305; it reads WPMAMKGRDL…KKFLYNPYKV (176 aa). Residue 143–150 participates in ATP binding; sequence AETGSGKT. The short motif at 253-256 is the DEAD box element; sequence DEAD. Residues 333–478 enclose the Helicase C-terminal domain; that stretch reads KLVKLLEDIM…KVSPELASMG (146 aa). A disordered region spans residues 473 to 501; the sequence is ELASMGRSTAPPPPGLGGFRDRGSRRGWS. The segment covering 491–501 has biased composition (basic and acidic residues); sequence FRDRGSRRGWS.

Belongs to the DEAD box helicase family. DDX5/DBP2 subfamily.

It is found in the nucleus. It carries out the reaction ATP + H2O = ADP + phosphate + H(+). In terms of biological role, ATP-dependent RNA helicase involved nonsense-mediated mRNA decay and ribosome biogenesis through rRNA processing. This is DEAD-box ATP-dependent RNA helicase 20 (RH20) from Arabidopsis thaliana (Mouse-ear cress).